Here is a 353-residue protein sequence, read N- to C-terminus: Rhodopsin (353 aa).

At 1-36 (MNGTEGPFFYVPMVNTTGIVRSPYEYPQYYLVNPAA) the chain is on the extracellular side. 2 N-linked (GlcNAc...) asparagine glycosylation sites follow: asparagine 2 and asparagine 15. The helical transmembrane segment at 37-61 (YAALGAYMFLLILVGFPINFLTLYV) threads the bilayer. Over 62–73 (TIEHKKLRTPLN) the chain is Cytoplasmic. A helical membrane pass occupies residues 74-96 (YILLNLAVADLFMVLGGFTTTMY). The Extracellular portion of the chain corresponds to 97–110 (TSMHGYFVLGRLGC). Residues cysteine 110 and cysteine 187 are joined by a disulfide bond. The chain crosses the membrane as a helical span at residues 111-133 (NIEGFFATLGGEIALWSLVVLAI). The short motif at 134–136 (ERW) is the 'Ionic lock' involved in activated form stabilization element. Topologically, residues 134–152 (ERWVVVCKPISNFRFGENH) are cytoplasmic. A helical transmembrane segment spans residues 153 to 173 (AIMGLAFTWTMAMACAAPPLV). The Extracellular segment spans residues 174–202 (GWSRYIPEGMQCSCGIDYYTRAEGFNNES). Asparagine 200 carries an N-linked (GlcNAc...) asparagine glycan. A helical membrane pass occupies residues 203–224 (FVIYMFICHFTIPLTVVFFCYG). Topologically, residues 225-252 (RLLCAVKEAAAAQQESETTQRAEKEVTR) are cytoplasmic. The helical transmembrane segment at 253-274 (MVIMMVIAFLVCWLPYASVAWY) threads the bilayer. The Extracellular segment spans residues 275–286 (IFTHQGSEFGPV). The chain crosses the membrane as a helical span at residues 287 to 308 (FMTIPAFFAKSSSIYNPMIYIC). An N6-(retinylidene)lysine modification is found at lysine 296. Topologically, residues 309–353 (LNKQFRHCMITTLCCGKNPFEEEEGASTASKTEASSVSSSSVSPA) are cytoplasmic. S-palmitoyl cysteine attachment occurs at residues cysteine 322 and cysteine 323. The tract at residues 331 to 353 (EEGASTASKTEASSVSSSSVSPA) is disordered. Over residues 334 to 353 (ASTASKTEASSVSSSSVSPA) the composition is skewed to low complexity.

It belongs to the G-protein coupled receptor 1 family. Opsin subfamily. Phosphorylated on some or all of the serine and threonine residues present in the C-terminal region. In terms of processing, contains one covalently linked retinal chromophore.

It is found in the membrane. It localises to the cell projection. Its subcellular location is the cilium. The protein resides in the photoreceptor outer segment. Functionally, photoreceptor required for image-forming vision at low light intensity. While most salt water fish species use retinal as chromophore, most freshwater fish use 3-dehydroretinal, or a mixture of retinal and 3-dehydroretinal. Light-induced isomerization of 11-cis to all-trans retinal triggers a conformational change that activates signaling via G-proteins. Subsequent receptor phosphorylation mediates displacement of the bound G-protein alpha subunit by arrestin and terminates signaling. This Diplodus annularis (Annular seabream) protein is Rhodopsin (rho).